A 130-amino-acid chain; its full sequence is Small ribosomal subunit protein uS11c (130 aa).

This sequence belongs to the universal ribosomal protein uS11 family. Part of the 30S ribosomal subunit.

It localises to the plastid. The protein localises to the chloroplast. The polypeptide is Small ribosomal subunit protein uS11c (Nephroselmis olivacea (Green alga)).